The primary structure comprises 974 residues: Bifunctional glutamine synthetase adenylyltransferase/adenylyl-removing enzyme (974 aa).

Residues 1-464 form an adenylyl removase region; it reads MKNAFLKTHL…HYAALFENEQ (464 aa). Residues 468-974 are adenylyl transferase; sequence LEIGNLVFTG…CSIFKQIMKH (507 aa).

Belongs to the GlnE family. The cofactor is Mg(2+).

The enzyme catalyses [glutamine synthetase]-O(4)-(5'-adenylyl)-L-tyrosine + phosphate = [glutamine synthetase]-L-tyrosine + ADP. It carries out the reaction [glutamine synthetase]-L-tyrosine + ATP = [glutamine synthetase]-O(4)-(5'-adenylyl)-L-tyrosine + diphosphate. Functionally, involved in the regulation of glutamine synthetase GlnA, a key enzyme in the process to assimilate ammonia. When cellular nitrogen levels are high, the C-terminal adenylyl transferase (AT) inactivates GlnA by covalent transfer of an adenylyl group from ATP to specific tyrosine residue of GlnA, thus reducing its activity. Conversely, when nitrogen levels are low, the N-terminal adenylyl removase (AR) activates GlnA by removing the adenylyl group by phosphorolysis, increasing its activity. The regulatory region of GlnE binds the signal transduction protein PII (GlnB) which indicates the nitrogen status of the cell. This Bartonella quintana (strain Toulouse) (Rochalimaea quintana) protein is Bifunctional glutamine synthetase adenylyltransferase/adenylyl-removing enzyme.